The primary structure comprises 68 residues: Protein transport protein Sec61 gamma-2 subunit (68 aa).

Topologically, residues 1–32 (MDKVVKFAEPGRAFAKDSIRLVKRCTKPDRKE) are cytoplasmic. Residues 33–61 (FQKIAIATAVGFCIMGFIGFFVKLIHIPI) traverse the membrane as a helical segment. Topologically, residues 62-68 (NNIIVGS) are extracellular.

Belongs to the SecE/SEC61-gamma family. Heterotrimeric complex composed of SEC61-alpha, SEC61-beta and SEC61-gamma.

The protein resides in the endoplasmic reticulum membrane. Necessary for protein translocation in the endoplasmic reticulum. This is Protein transport protein Sec61 gamma-2 subunit (Sec61gamma) from Drosophila melanogaster (Fruit fly).